The chain runs to 415 residues: Esterase FrsA (415 aa).

The protein belongs to the FrsA family.

It carries out the reaction a carboxylic ester + H2O = an alcohol + a carboxylate + H(+). Catalyzes the hydrolysis of esters. This Yersinia pseudotuberculosis serotype O:1b (strain IP 31758) protein is Esterase FrsA.